The sequence spans 420 residues: Tyrosine--tRNA ligase (420 aa).

An L-tyrosine-binding site is contributed by tyrosine 36. The 'HIGH' region motif lies at proline 41–histidine 50. Tyrosine 170 and glutamine 174 together coordinate L-tyrosine. The 'KMSKS' region motif lies at lysine 231 to serine 235. Lysine 234 contacts ATP. In terms of domain architecture, S4 RNA-binding spans threonine 353–lysine 420.

This sequence belongs to the class-I aminoacyl-tRNA synthetase family. TyrS type 1 subfamily. In terms of assembly, homodimer.

The protein localises to the cytoplasm. It carries out the reaction tRNA(Tyr) + L-tyrosine + ATP = L-tyrosyl-tRNA(Tyr) + AMP + diphosphate + H(+). Functionally, catalyzes the attachment of tyrosine to tRNA(Tyr) in a two-step reaction: tyrosine is first activated by ATP to form Tyr-AMP and then transferred to the acceptor end of tRNA(Tyr). This Staphylococcus carnosus (strain TM300) protein is Tyrosine--tRNA ligase.